A 278-amino-acid polypeptide reads, in one-letter code: 4-diphosphocytidyl-2-C-methyl-D-erythritol kinase (278 aa).

Lys-9 is an active-site residue. 89-99 provides a ligand contact to ATP; it reads PVASGIGGGSA. Residue Asp-128 is part of the active site.

It belongs to the GHMP kinase family. IspE subfamily.

It catalyses the reaction 4-CDP-2-C-methyl-D-erythritol + ATP = 4-CDP-2-C-methyl-D-erythritol 2-phosphate + ADP + H(+). It participates in isoprenoid biosynthesis; isopentenyl diphosphate biosynthesis via DXP pathway; isopentenyl diphosphate from 1-deoxy-D-xylulose 5-phosphate: step 3/6. In terms of biological role, catalyzes the phosphorylation of the position 2 hydroxy group of 4-diphosphocytidyl-2C-methyl-D-erythritol. The chain is 4-diphosphocytidyl-2-C-methyl-D-erythritol kinase from Cereibacter sphaeroides (strain KD131 / KCTC 12085) (Rhodobacter sphaeroides).